The sequence spans 357 residues: Protein pelota homolog (357 aa).

It belongs to the eukaryotic release factor 1 family. Pelota subfamily. In terms of assembly, monomer. A divalent metal cation serves as cofactor.

Its subcellular location is the cytoplasm. In terms of biological role, may function in recognizing stalled ribosomes, interact with stem-loop structures in stalled mRNA molecules, and effect endonucleolytic cleavage of the mRNA. May play a role in the release non-functional ribosomes and degradation of damaged mRNAs. Has endoribonuclease activity. The polypeptide is Protein pelota homolog (Methanocella arvoryzae (strain DSM 22066 / NBRC 105507 / MRE50)).